A 245-amino-acid polypeptide reads, in one-letter code: tRNA (guanine-N(1)-)-methyltransferase (245 aa).

Glycine 114 contacts S-adenosyl-L-methionine.

This sequence belongs to the RNA methyltransferase TrmD family. As to quaternary structure, homodimer.

The protein resides in the cytoplasm. It catalyses the reaction guanosine(37) in tRNA + S-adenosyl-L-methionine = N(1)-methylguanosine(37) in tRNA + S-adenosyl-L-homocysteine + H(+). Its function is as follows. Specifically methylates guanosine-37 in various tRNAs. In Sphingopyxis alaskensis (strain DSM 13593 / LMG 18877 / RB2256) (Sphingomonas alaskensis), this protein is tRNA (guanine-N(1)-)-methyltransferase.